Reading from the N-terminus, the 491-residue chain is F-box/LRR-repeat protein 7 (491 aa).

Positions 1–79 (MGANNGKQYG…GRGSSTSSSS (79 aa)) are disordered. Residues 10 to 26 (GSEGKGSSSISSDVSSS) are compositionally biased toward low complexity. Polar residues predominate over residues 27–55 (TDHTPTKAQKNVATSEDSDLSMRTLSTPS). In terms of domain architecture, F-box spans 111–157 (QASIDRLPDHSMVQIFSFLPTNQLCRCARVCRRWYNLAWDPRLWRTI). LRR repeat units lie at residues 170–195 (LKVL…TVSG), 196–221 (CRRL…EVSG), 222–247 (CYNI…DVSG), 253–281 (CISL…DMTD), 282–307 (CFVL…YLRR), 308–333 (CVRL…SVSD), 334–359 (CRFV…SIAH), 360–385 (CGRV…NARG), 386–411 (CEGI…DIGK), 412–437 (CPLV…SLKS), and 438–463 (CESI…NVQD).

This sequence belongs to the FBXL7 family. In terms of assembly, part of the SCF (SKP1-CUL1-F-box) E3 ubiquitin-protein ligase complex SCF(FBXL7) composed of CUL1, SKP1, RBX1 and FBXL7. Interacts with AURKA; interaction takes place during mitosis but not in interphase. Interacts with BIRC5; this interaction allows BIRC5 to be polyubiquitinated by the SCF(FBXL7) E3 ubiquitin-protein ligase complex.

It localises to the cytoplasm. The protein localises to the cytoskeleton. Its subcellular location is the microtubule organizing center. It is found in the centrosome. Its pathway is protein modification; protein ubiquitination. Functionally, substrate recognition component of a SCF (SKP1-CUL1-F-box protein) E3 ubiquitin-protein ligase complex. During mitosis, it mediates the ubiquitination and subsequent proteasomal degradation of AURKA, causing mitotic arrest. It also regulates mitochondrial function by mediating the ubiquitination and proteasomal degradation of the apoptosis inhibitor BIRC5. In Homo sapiens (Human), this protein is F-box/LRR-repeat protein 7 (FBXL7).